Here is a 189-residue protein sequence, read N- to C-terminus: Leucine repeat adapter protein 25 (189 aa).

Serine 28 carries the phosphoserine modification. Residues 54 to 82 (ELSRAARAPDGPRHAAGSANSGSAAGPRR) form a disordered region. Residues 68–79 (AAGSANSGSAAG) show a composition bias toward low complexity. Residues 86-114 (LDSALAALRKEMVGLRQLDMSLLCQLWGL) form an LRR repeat. Residues 136–175 (SSLHSDSSYPPDAGLSDDEEPPDASLPPDPPPLTVPQTHN) form a disordered region. Over residues 159 to 169 (ASLPPDPPPLT) the composition is skewed to pro residues. At serine 188 the chain carries Phosphoserine.

The protein belongs to the FAM89 family. Interacts with SKI. Interacts (via LRR repeat) with CDC42BPA (via AGC-kinase C-terminal domain), CDC42BPB (via AGC-kinase C-terminal domain) and LIMK1 (via LIM zinc-binding domains). Forms a tripartite complex with CDC42BPA, CDC42BPB and LIMK1. In terms of assembly, (Microbial infection) Interacts with mouse mammary tumor virus (MMTV) envelope glycoprotein gp70. As to expression, widely expressed. Expressed in the early postnatal brain.

The protein localises to the cytoplasm. The protein resides in the cell projection. Its subcellular location is the lamellipodium. It localises to the cell surface. Its function is as follows. Negatively regulates TGF-beta-induced signaling; in cooperation with SKI prevents the translocation of SMAD2 from the nucleus to the cytoplasm in response to TGF-beta. Acts as an adapter that mediates the specific recognition of LIMK1 by CDC42BPA and CDC42BPB in the lamellipodia. LRAP25-mediated CDC42BPA/CDC42BPB targeting to LIMK1 and the lamellipodium results in LIMK1 activation and the subsequent phosphorylation of CFL1 which is important for lamellipodial F-actin regulation. (Microbial infection) May be a receptor for mouse mammary tumor virus (MMTV). The sequence is that of Leucine repeat adapter protein 25 from Mus musculus (Mouse).